Consider the following 690-residue polypeptide: Proprotein convertase subtilisin/kexin type 9 (690 aa).

A signal peptide spans 1-28 (MGTVSSRRLWWPLPLLLLLLLGPTGTRA). The propeptide occupies 29 to 150 (QEEDDDDYEE…IEEDSSVFAQ (122 aa)). At Tyr36 the chain carries Sulfotyrosine. Position 45 is a phosphoserine (Ser45). In terms of domain architecture, Inhibitor I9 spans 75–147 (TYVVVLKEET…VDYIEEDSSV (73 aa)). In terms of domain architecture, Peptidase S8 spans 153-459 (PWNLERITPA…GWQLFCRTVW (307 aa)). Catalysis depends on charge relay system residues Asp184 and His224. Intrachain disulfides connect Cys221/Cys253 and Cys321/Cys356. The active-site Charge relay system is the Ser384. The segment at 448 to 690 (GAGWQLFCRT…HLAQASQELQ (243 aa)) is C-terminal domain. Disulfide bonds link Cys455–Cys525, Cys475–Cys524, and Cys484–Cys507. The N-linked (GlcNAc...) asparagine glycan is linked to Asn531. Intrachain disulfides connect Cys532–Cys599, Cys550–Cys598, Cys560–Cys586, Cys606–Cys677, Cys624–Cys676, and Cys633–Cys652. The residue at position 686 (Ser686) is a Phosphoserine.

It belongs to the peptidase S8 family. Monomer. Can self-associate to form dimers and higher multimers which may have increased LDLR degrading activity. The precursor protein but not the mature protein may form multimers. Interacts with APOB, VLDLR, LRP8/APOER2 and BACE1. The full-length immature form (pro-PCSK9) interacts with SCNN1A, SCNN1B and SCNN1G. The pro-PCSK9 form (via C-terminal domain) interacts with LDLR. Interacts (via the C-terminal domain) with ANXA2 (via repeat Annexin 1); the interaction inhibits the degradation of LDLR. Requires Ca(2+) as cofactor. Post-translationally, cleavage by furin and PCSK5 generates a truncated inactive protein that is unable to induce LDLR degradation. In terms of processing, undergoes autocatalytic cleavage in the endoplasmic reticulum to release the propeptide from the N-terminus and the cleavage of the propeptide is strictly required for its maturation and activation. The cleaved propeptide however remains associated with the catalytic domain through non-covalent interactions, preventing potential substrates from accessing its active site. As a result, it is secreted from cells as a propeptide-containing, enzymatically inactive protein. Phosphorylation protects the propeptide against proteolysis.

The protein resides in the cytoplasm. Its subcellular location is the secreted. It localises to the endosome. It is found in the lysosome. The protein localises to the cell surface. The protein resides in the endoplasmic reticulum. Its subcellular location is the golgi apparatus. Its activity is regulated as follows. Its proteolytic activity is autoinhibited by the non-covalent binding of the propeptide to the catalytic domain. Inhibited by EGTA. Functionally, crucial player in the regulation of plasma cholesterol homeostasis. Binds to low-density lipid receptor family members: low density lipoprotein receptor (LDLR), very low density lipoprotein receptor (VLDLR), apolipoprotein E receptor (LRP1/APOER) and apolipoprotein receptor 2 (LRP8/APOER2), and promotes their degradation in intracellular acidic compartments. Acts via a non-proteolytic mechanism to enhance the degradation of the hepatic LDLR through a clathrin LDLRAP1/ARH-mediated pathway. May prevent the recycling of LDLR from endosomes to the cell surface or direct it to lysosomes for degradation. Can induce ubiquitination of LDLR leading to its subsequent degradation. Inhibits intracellular degradation of APOB via the autophagosome/lysosome pathway in a LDLR-independent manner. Involved in the disposal of non-acetylated intermediates of BACE1 in the early secretory pathway. Inhibits epithelial Na(+) channel (ENaC)-mediated Na(+) absorption by reducing ENaC surface expression primarily by increasing its proteasomal degradation. Regulates neuronal apoptosis via modulation of LRP8/APOER2 levels and related anti-apoptotic signaling pathways. In Callithrix jacchus (White-tufted-ear marmoset), this protein is Proprotein convertase subtilisin/kexin type 9 (PCSK9).